The following is a 420-amino-acid chain: Acetyl-CoA acetyltransferase A, mitochondrial (420 aa).

Residues M1 to N33 constitute a mitochondrion transit peptide. C119 functions as the Acyl-thioester intermediate in the catalytic mechanism. CoA contacts are provided by residues Y212, R251–D253, and K256. Y212 is a binding site for K(+). Residues A273 and A274 each coordinate K(+). Residue S277 coordinates CoA. V374 contacts K(+). Catalysis depends on C406, which acts as the Proton donor/acceptor.

This sequence belongs to the thiolase-like superfamily. Thiolase family. In terms of assembly, homotetramer.

It is found in the mitochondrion. It carries out the reaction 2 acetyl-CoA = acetoacetyl-CoA + CoA. It catalyses the reaction propanoyl-CoA + acetyl-CoA = 2-methyl-3-oxobutanoyl-CoA + CoA. It participates in lipid metabolism; fatty acid beta-oxidation. This is one of the enzymes that catalyzes the last step of the mitochondrial beta-oxidation pathway, an aerobic process breaking down fatty acids into acetyl-CoA. Using free coenzyme A/CoA, catalyzes the thiolytic cleavage of medium- to long-chain 3-oxoacyl-CoAs into acetyl-CoA and a fatty acyl-CoA shortened by two carbon atoms. The activity of the enzyme is reversible and it can also catalyze the condensation of two acetyl-CoA molecules into acetoacetyl-CoA. Thereby, it plays a major role in ketone body metabolism. The polypeptide is Acetyl-CoA acetyltransferase A, mitochondrial (acat1-a) (Xenopus laevis (African clawed frog)).